An 887-amino-acid polypeptide reads, in one-letter code: Chaperone protein ClpB 2 (887 aa).

The Clp R domain occupies 6–147 (PTKFTDKAWE…AATVKAIRGA (142 aa)). Repeat stretches follow at residues 9–73 (FTDK…ARQQ) and 84–147 (CGRS…IRGA). An NBD1 region spans residues 160 to 342 (AALEKYGRDL…RRFQQVYIGQ (183 aa)). An ATP-binding site is contributed by 207–214 (GEPGVGKT). Residues 343-559 (PSVEDTISIL…IAEIVAKWTG (217 aa)) form a linker region. A coiled-coil region spans residues 393-535 (IDLVDEAAAK…TEAQLLELQA (143 aa)). Residues 569-780 (ERQKLLQLEQ…RIDDVILFHG (212 aa)) form an NBD2 region. 619 to 626 (GPTGVGKT) is a binding site for ATP. The interval 781-887 (LGRTELAQIA…TGDRDTVSAS (107 aa)) is C-terminal.

It belongs to the ClpA/ClpB family. As to quaternary structure, homohexamer. The oligomerization is ATP-dependent.

The protein localises to the cytoplasm. Functionally, part of a stress-induced multi-chaperone system, it is involved in the recovery of the cell from heat-induced damage, in cooperation with DnaK, DnaJ and GrpE. Acts before DnaK, in the processing of protein aggregates. Protein binding stimulates the ATPase activity; ATP hydrolysis unfolds the denatured protein aggregates, which probably helps expose new hydrophobic binding sites on the surface of ClpB-bound aggregates, contributing to the solubilization and refolding of denatured protein aggregates by DnaK. The protein is Chaperone protein ClpB 2 (clpB2) of Thermosynechococcus vestitus (strain NIES-2133 / IAM M-273 / BP-1).